The sequence spans 305 residues: Probable 5-dehydro-4-deoxyglucarate dehydratase (305 aa).

It belongs to the DapA family.

It catalyses the reaction 5-dehydro-4-deoxy-D-glucarate + H(+) = 2,5-dioxopentanoate + CO2 + H2O. The protein operates within carbohydrate acid metabolism; D-glucarate degradation; 2,5-dioxopentanoate from D-glucarate: step 2/2. The protein is Probable 5-dehydro-4-deoxyglucarate dehydratase of Xanthomonas campestris pv. campestris (strain B100).